The sequence spans 64 residues: Large ribosomal subunit protein uL29 (64 aa).

The protein belongs to the universal ribosomal protein uL29 family.

The chain is Large ribosomal subunit protein uL29 from Dichelobacter nodosus (strain VCS1703A).